A 764-amino-acid chain; its full sequence is Phosphoribosylformylglycinamidine synthase subunit PurL (764 aa).

Residue His-57 is part of the active site. Tyr-60 and Lys-104 together coordinate ATP. Residue Glu-106 participates in Mg(2+) binding. Residues 107–110 (SHNH) and Arg-129 contribute to the substrate site. His-108 (proton acceptor) is an active-site residue. A Mg(2+)-binding site is contributed by Asp-130. Residue Gln-258 participates in substrate binding. A Mg(2+)-binding site is contributed by Asp-286. 330–332 (ESQ) contributes to the substrate binding site. 2 residues coordinate ATP: Asn-518 and Gly-555. A Mg(2+)-binding site is contributed by Asn-556. Ser-558 contacts substrate.

This sequence belongs to the FGAMS family. As to quaternary structure, monomer. Part of the FGAM synthase complex composed of 1 PurL, 1 PurQ and 2 PurS subunits.

The protein resides in the cytoplasm. It catalyses the reaction N(2)-formyl-N(1)-(5-phospho-beta-D-ribosyl)glycinamide + L-glutamine + ATP + H2O = 2-formamido-N(1)-(5-O-phospho-beta-D-ribosyl)acetamidine + L-glutamate + ADP + phosphate + H(+). The protein operates within purine metabolism; IMP biosynthesis via de novo pathway; 5-amino-1-(5-phospho-D-ribosyl)imidazole from N(2)-formyl-N(1)-(5-phospho-D-ribosyl)glycinamide: step 1/2. In terms of biological role, part of the phosphoribosylformylglycinamidine synthase complex involved in the purines biosynthetic pathway. Catalyzes the ATP-dependent conversion of formylglycinamide ribonucleotide (FGAR) and glutamine to yield formylglycinamidine ribonucleotide (FGAM) and glutamate. The FGAM synthase complex is composed of three subunits. PurQ produces an ammonia molecule by converting glutamine to glutamate. PurL transfers the ammonia molecule to FGAR to form FGAM in an ATP-dependent manner. PurS interacts with PurQ and PurL and is thought to assist in the transfer of the ammonia molecule from PurQ to PurL. The polypeptide is Phosphoribosylformylglycinamidine synthase subunit PurL (Nocardia farcinica (strain IFM 10152)).